Here is a 543-residue protein sequence, read N- to C-terminus: Protein male-specific lethal-3 (543 aa).

Positions 10–90 (LFNRGEKVLC…KLQRELAEAA (81 aa)) constitute a Chromo domain. The disordered stretch occupies residues 93-247 (QKTGGYSYKD…THTTDAEKRI (155 aa)). 3 stretches are compositionally biased toward basic and acidic residues: residues 180–202 (RSRDGSGNRSRDGSGNRSRDNSS), 210–224 (KSKGGDKNDDGERRS), and 234–247 (SPKDTHTTDAEKRI). Residues 249-542 (QEDRVMLRIS…PLIDQGRELS (294 aa)) enclose the MRG domain.

Component of the male-specific lethal (MSL) histone acetyltransferase complex, composed of mof, mle, msl-1, msl-2 and msl-3 proteins, as well as roX1 and roX2 non-coding RNAs. Post-translationally, ubiquitinated by msl-2.

The protein localises to the nucleus. The protein resides in the chromosome. Its function is as follows. Component of the male-specific lethal (MSL) histone acetyltransferase complex, a multiprotein complex essential for elevating transcription of the single X chromosome in the male (X chromosome dosage compensation). The MSL complex specifically associates with the single X chromosome in males and mediates formation of H4K16ac, promoting a two-fold activation of X chromosome. Acts as a histone reader that specifically recognizes and binds histone H3 trimethylated at 'Lys-36' (H3K36me3) and histone H4 monomethylated at 'Lys-20' (H4K20me1). Within the MSL complex, mediates the spreading of the MSL complex from initiation sites on the male X chromosome to flanking chromatin. Following initial recruitment of the MSL complex to male X chromosome by msl-2, msl-3 binds H3K36me3 and promotes spreading of the MSL complex in cis. In addition to its role in dosage compensation in males, promotes germline stem cell differentiation in females: recognizes and binds H3K36me3, promoting recruitment of the ATAC complex and transcription of genes, such as RpS19b. The protein is Protein male-specific lethal-3 (msl-3) of Drosophila virilis (Fruit fly).